The primary structure comprises 505 residues: ATP nucleosidase Cap17 (505 aa).

Positions 1-229 (MTNTNNEYVL…RLSEIAVELL (229 aa)) are cyclic oligonucleotide sensing-domain. Positions 239–505 (LHTPSVLILT…DYLQHGWIRA (267 aa)) are purine nucleoside phosphorylase domain.

It belongs to the Cap17 family.

The catalysed reaction is ATP + H2O = D-ribose 5-triphosphate + adenine. It catalyses the reaction dATP + H2O = 2-deoxyribose 5-triphosphate + adenine. Functionally, effector protein with (d)ATP degrading activity of a CBASS antivirus system. CBASS (cyclic oligonucleotide-based antiphage signaling system) provides immunity against bacteriophage. A CD-NTase protein synthesizes cyclic nucleotides in response to infection; these serve as specific second messenger signals. The signals activate a diverse range of effectors, leading to bacterial cell death and thus abortive phage infection. A type III CBASS system. Expression of this CBASS system (Cap18-Cap6-Cap7-CdnC-CapW-Cap17) in a susceptible E.coli (strain MG1655) confers resistance to bacteriophage P1, leading to cell lysis. By 50 minutes post-infection, ATP levels are markedly reduced while dATP has been eliminated. The C-terminal purine nucleoside phosphorylase (PNP) domain cleaves the N-glycosidic bond of (d)ATP to release adenine and a sugar triphosphate; has no activity on other (d)NTPs, nor on DNA or RNA. In vivo during phage infection has pleoitropic effects on nucleotide accumulation. This protein may be activated by the cognate CD-NTase (CdnC). The protein is ATP nucleosidase Cap17 of Escherichia coli (strain KTE188).